A 449-amino-acid chain; its full sequence is Probable glycine dehydrogenase (decarboxylating) subunit 1 (449 aa).

The protein belongs to the GcvP family. N-terminal subunit subfamily. In terms of assembly, the glycine cleavage system is composed of four proteins: P, T, L and H. In this organism, the P 'protein' is a heterodimer of two subunits.

The catalysed reaction is N(6)-[(R)-lipoyl]-L-lysyl-[glycine-cleavage complex H protein] + glycine + H(+) = N(6)-[(R)-S(8)-aminomethyldihydrolipoyl]-L-lysyl-[glycine-cleavage complex H protein] + CO2. Its function is as follows. The glycine cleavage system catalyzes the degradation of glycine. The P protein binds the alpha-amino group of glycine through its pyridoxal phosphate cofactor; CO(2) is released and the remaining methylamine moiety is then transferred to the lipoamide cofactor of the H protein. In Rhodospirillum centenum (strain ATCC 51521 / SW), this protein is Probable glycine dehydrogenase (decarboxylating) subunit 1.